Here is a 2162-residue protein sequence, read N- to C-terminus: Polyketide synthase 1 (2162 aa).

Residues phenylalanine 19–histidine 264 are N-terminal acylcarrier protein transacylase domain (SAT). In terms of domain architecture, Ketosynthase family 3 (KS3) spans aspartate 397–aspartate 841. Active-site for beta-ketoacyl synthase activity residues include cysteine 578, histidine 713, and histidine 757. The tract at residues alanine 941 to tryptophan 1245 is malonyl-CoA:ACP transacylase (MAT) domain. The For acyl/malonyl transferase activity role is filled by serine 1030. Positions threonine 1322–alanine 1636 are product template (PT) domain. An N-terminal hotdog fold region spans residues histidine 1326–alanine 1459. The 306-residue stretch at histidine 1326 to aspartate 1631 folds into the PKS/mFAS DH domain. Histidine 1358 serves as the catalytic Proton acceptor; for dehydratase activity. The tract at residues leucine 1486 to aspartate 1631 is C-terminal hotdog fold. Aspartate 1545 acts as the Proton donor; for dehydratase activity in catalysis. The tract at residues alanine 1633–glutamine 1669 is disordered. Residues proline 1658–glutamine 1669 are compositionally biased toward low complexity. Positions isoleucine 1692–threonine 1766 constitute a Carrier 1 domain. Serine 1726 bears the O-(pantetheine 4'-phosphoryl)serine mark. Residues serine 1772–serine 1783 show a composition bias toward low complexity. The interval serine 1772–serine 1809 is disordered. Polar residues predominate over residues serine 1794 to serine 1809. The 78-residue stretch at serine 1807–isoleucine 1884 folds into the Carrier 2 domain. Serine 1844 bears the O-(pantetheine 4'-phosphoryl)serine mark. The interval leucine 1896–alanine 2160 is thioesterase (TE) domain. Serine 1987 functions as the For thioesterase activity in the catalytic mechanism.

Its function is as follows. Polyketide synthase; part of the Pks1 gene cluster that mediates the biosynthesis of an anthraquinone derivative pigment that contributes to conidial pigmentation that provides protection from UV radiation, heat and cold stress. The polyketide synthase Pks1 produces 1-acetyl-2,4,6,8-tetrahydroxy-9,10-anthraquinone though condensation of acetyl-CoA with malonyl-CoA. The dehydratase EthD and the laccase Mlac1 further convert the anthraquinone derivative into the final conidial pigment. In Metarhizium album (strain ARSEF 1941), this protein is Polyketide synthase 1.